Reading from the N-terminus, the 341-residue chain is Ketol-acid reductoisomerase (NADP(+)) (341 aa).

A KARI N-terminal Rossmann domain is found at 1–181 (MARVYREGDI…GCARAGVLET (181 aa)). Residues 24–27 (FGSQ), Ser-50, Ser-52, and 82–85 (DERQ) contribute to the NADP(+) site. Residue His-107 is part of the active site. Gly-133 is an NADP(+) binding site. A KARI C-terminal knotted domain is found at 182–327 (TFAEETETDL…AELRALAAEG (146 aa)). Asp-190, Glu-194, Glu-226, and Glu-230 together coordinate Mg(2+). Ser-251 provides a ligand contact to substrate.

Belongs to the ketol-acid reductoisomerase family. Mg(2+) is required as a cofactor.

The enzyme catalyses (2R)-2,3-dihydroxy-3-methylbutanoate + NADP(+) = (2S)-2-acetolactate + NADPH + H(+). The catalysed reaction is (2R,3R)-2,3-dihydroxy-3-methylpentanoate + NADP(+) = (S)-2-ethyl-2-hydroxy-3-oxobutanoate + NADPH + H(+). It participates in amino-acid biosynthesis; L-isoleucine biosynthesis; L-isoleucine from 2-oxobutanoate: step 2/4. The protein operates within amino-acid biosynthesis; L-valine biosynthesis; L-valine from pyruvate: step 2/4. Involved in the biosynthesis of branched-chain amino acids (BCAA). Catalyzes an alkyl-migration followed by a ketol-acid reduction of (S)-2-acetolactate (S2AL) to yield (R)-2,3-dihydroxy-isovalerate. In the isomerase reaction, S2AL is rearranged via a Mg-dependent methyl migration to produce 3-hydroxy-3-methyl-2-ketobutyrate (HMKB). In the reductase reaction, this 2-ketoacid undergoes a metal-dependent reduction by NADPH to yield (R)-2,3-dihydroxy-isovalerate. The sequence is that of Ketol-acid reductoisomerase (NADP(+)) from Rubrobacter xylanophilus (strain DSM 9941 / JCM 11954 / NBRC 16129 / PRD-1).